The sequence spans 415 residues: Multidrug resistance protein MdtA (415 aa).

A signal peptide spans 1–21 (MKGSYKSRWVIVIVVVIAAIA). 2 disordered regions span residues 32–59 (SRSA…SGPL) and 392–415 (EAQS…GARS). Residues 399–415 (SEEKATSREYAKKGARS) are compositionally biased toward basic and acidic residues.

It belongs to the membrane fusion protein (MFP) (TC 8.A.1) family. In terms of assembly, part of a tripartite efflux system composed of MdtA, MdtB and MdtC.

The protein resides in the cell inner membrane. In terms of biological role, the MdtABC tripartite complex confers resistance against novobiocin and deoxycholate. The protein is Multidrug resistance protein MdtA of Escherichia coli (strain SMS-3-5 / SECEC).